We begin with the raw amino-acid sequence, 366 residues long: Subtilisin-like protease het-Q2 (366 aa).

The Peptidase S8 domain occupies 1–321 (MSAISHHSLS…RVLMALGEKT (321 aa)). The active-site Charge relay system is aspartate 35. The tract at residues 79-98 (DFCQPSPPGDRQGPPPQPHS) is disordered. A compositionally biased stretch (pro residues) spans 83–96 (PSPPGDRQGPPPQP). Active-site charge relay system residues include histidine 105 and serine 266. Residues 261 to 283 (LVSGSSFATPVVVSVAALVLAFV) form a helical membrane-spanning segment.

It belongs to the peptidase S8 family.

The protein resides in the membrane. In terms of biological role, serine protease involved in heterokaryon incompatibility, a process that ensures that during spontaneous vegetative cell fusion, only compatible cells from the same colony survive (non-self-recognition). In P.anserina, the het-q locus exists as 2 incompatible alleles, het-Q1 (AC B2AXJ5) and het-Q2 (this entry). Prevents cell fusion with strains containing the gasdermin-like protein het-Q1 by mediating proteolytic cleavage and maturation of het-Q1 during the allorecognition process, thereby triggering cell death. This chain is Subtilisin-like protease het-Q2, found in Podospora anserina (Pleurage anserina).